Reading from the N-terminus, the 847-residue chain is uncharacterized protein (847 aa).

Positions 116 to 126 (TGSSELTTSKT) are enriched in polar residues. Disordered regions lie at residues 116 to 153 (TGSSELTTSKTPIDVDTKEQENRLKQKAEAAPKSTPIE), 208 to 245 (LKNFEDKSPPQAENASSSKKDEPISVECTDETSSRLSP), and 361 to 392 (DLEKNKESSSASLSTNKLAESPTEADKNSNVI). Residues 128–145 (IDVDTKEQENRLKQKAEA) show a composition bias toward basic and acidic residues. Residues 368–378 (SSSASLSTNKL) are compositionally biased toward polar residues.

This is an uncharacterized protein from Caenorhabditis elegans.